We begin with the raw amino-acid sequence, 2313 residues long: Cell surface glycoprotein 1 (2313 aa).

The signal sequence occupies residues 1–28 (MKRKNKVLSILLTLLLIISTTSVNMSFA). 2 consecutive Cohesin domains span residues 34–197 (IEMV…VVEA) and 205–367 (VALE…EIVV). Residues 369–378 (GEEPGEEPTE) show a composition bias toward acidic residues. The tract at residues 369-400 (GEEPGEEPTEEPVPTETSVDPTPTVTEEPVPS) is disordered. The segment covering 380–400 (PVPTETSVDPTPTVTEEPVPS) has biased composition (low complexity). The 163-residue stretch at 407 to 569 (VIMELDKTKV…SVVQPGEIVV (163 aa)) folds into the Cohesin 3 domain. Acidic residues predominate over residues 571–580 (GEEPGEEPTE). Residues 571–602 (GEEPGEEPTEEPVPTETSVDPTPTVTEEPVPS) form a disordered region. The segment covering 582–602 (PVPTETSVDPTPTVTEEPVPS) has biased composition (low complexity). Positions 609 to 771 (VIMELDKTKV…SVVQPGEIVA (163 aa)) constitute a Cohesin 4 domain. Residues 772-782 (EGEEPGEEPTE) show a composition bias toward acidic residues. A disordered region spans residues 772–805 (EGEEPGEEPTEEPVPTETSADPTPTVTEEPVPSE). The segment covering 784–803 (PVPTETSADPTPTVTEEPVP) has biased composition (low complexity). The 163-residue stretch at 811 to 973 (VIMELDKTKV…SVVQPGEIVA (163 aa)) folds into the Cohesin 5 domain. Positions 974–984 (EGEEPGEEPTE) are enriched in acidic residues. Residues 974 to 1007 (EGEEPGEEPTEEPVPTETPVDPTPTVTEEPVPSE) form a disordered region. Residues 986–1007 (PVPTETPVDPTPTVTEEPVPSE) are compositionally biased toward low complexity. Positions 1013-1175 (VIMELDKTKV…SVVQPGEIVA (163 aa)) constitute a Cohesin 6 domain. 2 disordered regions span residues 1177–1203 (GEEPTEEPVPTETPVDPTPTVTEEPVP) and 1374–2111 (ASDE…PDGS). A compositionally biased stretch (low complexity) spans 1184–1203 (PVPTETPVDPTPTVTEEPVP). In terms of domain architecture, Cohesin 7 spans 1211–1375 (VIMELDKTKV…IQPAPIKAAS (165 aa)). The segment covering 1376 to 1390 (DEPIPTDTPSDEPTP) has biased composition (low complexity). Residues 1383–2025 (TPSDEPTPSD…SDEPTPSETP (643 aa)) are approximate tandem repeats of T-P-S-D-E-P. Residues 1391-1411 (SDEPTPSDEPTPSDEPTPSDE) show a composition bias toward pro residues. The segment covering 1423–1433 (PTDTPSDEPTP) has biased composition (low complexity). A compositionally biased stretch (pro residues) spans 1434–1454 (SDEPTPSDEPTPSDEPTPSDE). Over residues 1466–1476 (PTDTPSDEPTP) the composition is skewed to low complexity. A compositionally biased stretch (pro residues) spans 1477–1497 (SDEPTPSDEPTPSDEPTPSDE). Residues 1509-1519 (PTDTPSDEPTP) are compositionally biased toward low complexity. A compositionally biased stretch (pro residues) spans 1520 to 1540 (SDEPTPSDEPTPSDEPTPSDE). The segment covering 1552–1562 (PTDTPSDEPTP) has biased composition (low complexity). Residues 1563-1595 (SDEPTPSDEPTPSDEPTPSDEPTPSDEPTPSDE) are compositionally biased toward pro residues. Low complexity predominate over residues 1607–1617 (PTDTPSDEPTP). Residues 1618-1650 (SDEPTPSDEPTPSDEPTPSDEPTPSDEPTPSDE) are compositionally biased toward pro residues. A compositionally biased stretch (low complexity) spans 1662–1672 (PTDTPSDEPTP). Pro residues predominate over residues 1673–1693 (SDEPTPSDEPTPSDEPTPSDE). Positions 1705–1715 (PTDTPSDEPTP) are enriched in low complexity. Residues 1716–1736 (SDEPTPSDEPTPSDEPTPSDE) are compositionally biased toward pro residues. Residues 1748-1758 (PTDTPSDEPTP) are compositionally biased toward low complexity. Over residues 1759 to 1779 (SDEPTPSDEPTPSDEPTPSDE) the composition is skewed to pro residues. The segment covering 1791–1801 (PTDTPSDEPTP) has biased composition (low complexity). Over residues 1802 to 1822 (SDEPTPSDEPTPSDEPTPSDE) the composition is skewed to pro residues. Residues 1834–1844 (PTDTPSDEPTP) are compositionally biased toward low complexity. Positions 1845-1865 (SDEPTPSDEPTPSDEPTPSDE) are enriched in pro residues. The segment covering 1877-1887 (PTDTPSDEPTP) has biased composition (low complexity). Pro residues predominate over residues 1888–1908 (SDEPTPSDEPTPSDEPTPSDE). The segment covering 1920-1930 (PTDTPSDEPTP) has biased composition (low complexity). Residues 1931–1963 (SDEPTPSDEPTPSDEPTPSDEPTPSDEPTPSDE) show a composition bias toward pro residues. The segment covering 1975 to 1985 (PTDTPSDEPTP) has biased composition (low complexity). Composition is skewed to pro residues over residues 1986-2018 (SDEPTPSDEPTPSDEPTPSDEPTPSDEPTPSDE) and 2027-2039 (EPTPTTTPTPTPS). Residues 2045–2062 (GSGGSGGSGGGGGGGGGT) show a composition bias toward gly residues. SLH domains lie at 2067–2140 (PTPT…YGAQ), 2141–2204 (SASP…EIMS), and 2211–2274 (ISNP…GAPK). Over residues 2073–2082 (SKPTSTPAPT) the composition is skewed to low complexity.

In terms of assembly, assembled into mono-layered crystalline arrays.

It localises to the secreted. Its subcellular location is the cell wall. The protein localises to the S-layer. This Acetivibrio thermocellus (strain ATCC 27405 / DSM 1237 / JCM 9322 / NBRC 103400 / NCIMB 10682 / NRRL B-4536 / VPI 7372) (Clostridium thermocellum) protein is Cell surface glycoprotein 1 (olpB).